A 585-amino-acid polypeptide reads, in one-letter code: Arginine--tRNA ligase (585 aa).

The 'HIGH' region signature appears at 131 to 141 (ANPTGPMHVGH).

This sequence belongs to the class-I aminoacyl-tRNA synthetase family. Monomer.

Its subcellular location is the cytoplasm. The enzyme catalyses tRNA(Arg) + L-arginine + ATP = L-arginyl-tRNA(Arg) + AMP + diphosphate. The chain is Arginine--tRNA ligase from Brucella canis (strain ATCC 23365 / NCTC 10854 / RM-666).